The sequence spans 513 residues: Histidine ammonia-lyase (513 aa).

Positions 144–146 (ASG) form a cross-link, 5-imidazolinone (Ala-Gly). A 2,3-didehydroalanine (Ser) modification is found at S145.

This sequence belongs to the PAL/histidase family. Post-translationally, contains an active site 4-methylidene-imidazol-5-one (MIO), which is formed autocatalytically by cyclization and dehydration of residues Ala-Ser-Gly.

The protein localises to the cytoplasm. It carries out the reaction L-histidine = trans-urocanate + NH4(+). Its pathway is amino-acid degradation; L-histidine degradation into L-glutamate; N-formimidoyl-L-glutamate from L-histidine: step 1/3. This Streptococcus pyogenes serotype M18 (strain MGAS8232) protein is Histidine ammonia-lyase.